Reading from the N-terminus, the 118-residue chain is MSGKNLIIQGIEEAQLKSELPEFSAGDTVTVQVKVKEGTRERLQAFQGVVIARRNRGLNSAFTVRKISHGVGVERVFQLHSPLIDSIEVNRRGDVSRAKLYYLRDRSGKSARIKEKIR.

This sequence belongs to the bacterial ribosomal protein bL19 family.

In terms of biological role, this protein is located at the 30S-50S ribosomal subunit interface and may play a role in the structure and function of the aminoacyl-tRNA binding site. This is Large ribosomal subunit protein bL19 from Alcanivorax borkumensis (strain ATCC 700651 / DSM 11573 / NCIMB 13689 / SK2).